A 44-amino-acid polypeptide reads, in one-letter code: Cytochrome b559 subunit beta (44 aa).

The chain crosses the membrane as a helical span at residues 17–41; it reads VRWLAVHTLAVPSVFFVGAIAAMQF. Residues arginine 18 and histidine 23 each coordinate heme.

The protein belongs to the PsbE/PsbF family. Heterodimer of an alpha subunit and a beta subunit. PSII is composed of 1 copy each of membrane proteins PsbA, PsbB, PsbC, PsbD, PsbE, PsbF, PsbH, PsbI, PsbJ, PsbK, PsbL, PsbM, PsbT, PsbX, PsbY, PsbZ, Psb30/Ycf12, peripheral proteins PsbO, CyanoQ (PsbQ), PsbU, PsbV and a large number of cofactors. It forms dimeric complexes. It depends on heme b as a cofactor.

The protein localises to the cellular thylakoid membrane. Functionally, this b-type cytochrome is tightly associated with the reaction center of photosystem II (PSII). PSII is a light-driven water:plastoquinone oxidoreductase that uses light energy to abstract electrons from H(2)O, generating O(2) and a proton gradient subsequently used for ATP formation. It consists of a core antenna complex that captures photons, and an electron transfer chain that converts photonic excitation into a charge separation. The chain is Cytochrome b559 subunit beta from Synechocystis sp. (strain ATCC 27184 / PCC 6803 / Kazusa).